The primary structure comprises 87 residues: Small ribosomal subunit protein uS17 (87 aa).

This sequence belongs to the universal ribosomal protein uS17 family. Part of the 30S ribosomal subunit.

Functionally, one of the primary rRNA binding proteins, it binds specifically to the 5'-end of 16S ribosomal RNA. This chain is Small ribosomal subunit protein uS17, found in Thioalkalivibrio sulfidiphilus (strain HL-EbGR7).